Here is a 236-residue protein sequence, read N- to C-terminus: Eukaryotic translation initiation factor 3 subunit J (236 aa).

Residues M1–R84 are disordered. Over residues G28–K46 the composition is skewed to acidic residues. Composition is skewed to basic and acidic residues over residues D47–A58 and A68–E77.

This sequence belongs to the eIF-3 subunit J family. As to quaternary structure, component of the eukaryotic translation initiation factor 3 (eIF-3) complex. The eIF-3 complex interacts with pix.

The protein localises to the cytoplasm. In terms of biological role, component of the eukaryotic translation initiation factor 3 (eIF-3) complex, which is involved in protein synthesis of a specialized repertoire of mRNAs and, together with other initiation factors, stimulates binding of mRNA and methionyl-tRNAi to the 40S ribosome. The eIF-3 complex specifically targets and initiates translation of a subset of mRNAs involved in cell proliferation. This Drosophila sechellia (Fruit fly) protein is Eukaryotic translation initiation factor 3 subunit J.